A 510-amino-acid polypeptide reads, in one-letter code: Hexose carrier protein HEX6 (510 aa).

The Cytoplasmic portion of the chain corresponds to 1-22 (MAAGLAITSEGGQYNGRMTSFV). 12 consecutive transmembrane segments (helical) span residues 23 to 43 (ALSCMMAAMGGVIFGYDIGVS), 83 to 103 (SFTSSLYVAGLVASFFASSVT), 118 to 128 (VFLAXAALGGA), 140 to 160 (VLLGVGVGFANQAVPLYLSEM), 169 to 189 (INNGFQFSVGIGALSANLINY), 202 to 222 (ISLAMAAVPAAILTFGALFLP), 284 to 304 (LVMAVAIPFFQQVTGINVIAF), 325 to 345 (IVTGLVGSASTFISMLIVDKL), 349 to 369 (ALFIFGGVQMFVAQIMVGSIM), 382 to 402 (GYAYIVLILICIYVAGFGWSW), 428 to 448 (AVSFLFTFVVAQTFLSMLCHF), and 451 to 471 (GIFFFFGGWVVVMTAFVHFLL). Residues 472-510 (PETKKVPIEKMDIVWRDHWFWKKIIGEEAAEENNKMEAA) are Cytoplasmic-facing.

The protein belongs to the major facilitator superfamily. Sugar transporter (TC 2.A.1.1) family.

The protein resides in the membrane. In terms of biological role, active uptake of hexoses. Probable glucose/hydrogen symport. This is Hexose carrier protein HEX6 (HEX6) from Ricinus communis (Castor bean).